A 287-amino-acid chain; its full sequence is Protease HtpX homolog (287 aa).

The next 2 membrane-spanning stretches (helical) occupy residues 4–24 (VGLF…VMSL) and 35–53 (LLLM…SLAL). Zn(2+) is bound at residue histidine 139. Glutamate 140 is an active-site residue. Histidine 143 contributes to the Zn(2+) binding site. A run of 2 helical transmembrane segments spans residues 147–167 (GDMV…IFLS) and 194–214 (AVSM…VMWF). Glutamate 219 is a binding site for Zn(2+).

The protein belongs to the peptidase M48B family. The cofactor is Zn(2+).

It localises to the cell inner membrane. This is Protease HtpX homolog from Desulfotalea psychrophila (strain LSv54 / DSM 12343).